The sequence spans 307 residues: tRNA N6-adenosine threonylcarbamoyltransferase (307 aa).

Positions 108 and 112 each coordinate Fe cation. Residues 131–135, aspartate 164, glycine 177, aspartate 181, and asparagine 266 each bind substrate; that span reads IVSGG. Residue aspartate 290 participates in Fe cation binding.

This sequence belongs to the KAE1 / TsaD family. Requires Fe(2+) as cofactor.

The protein resides in the cytoplasm. It catalyses the reaction L-threonylcarbamoyladenylate + adenosine(37) in tRNA = N(6)-L-threonylcarbamoyladenosine(37) in tRNA + AMP + H(+). In terms of biological role, required for the formation of a threonylcarbamoyl group on adenosine at position 37 (t(6)A37) in tRNAs that read codons beginning with adenine. Is involved in the transfer of the threonylcarbamoyl moiety of threonylcarbamoyl-AMP (TC-AMP) to the N6 group of A37, together with TsaE and TsaB. TsaD likely plays a direct catalytic role in this reaction. In Mycoplasmopsis synoviae (strain 53) (Mycoplasma synoviae), this protein is tRNA N6-adenosine threonylcarbamoyltransferase.